The primary structure comprises 151 residues: C-C motif chemokine 25 (151 aa).

The N-terminal stretch at 1 to 22 (MNLWLLVCLVASLMGAWSTVHT) is a signal peptide. Cystine bridges form between Cys29–Cys57 and Cys30–Cys73. The interval 94-151 (THSKQHLGSRRNLQDSHLGGQRSNTGMSRLAHSKSKSSRSTRSNKKKTSFLNMANPGP) is disordered. Basic residues predominate over residues 124 to 141 (AHSKSKSSRSTRSNKKKT).

Belongs to the intercrine beta (chemokine CC) family.

It is found in the secreted. In terms of biological role, potentially involved in T-cell development. Recombinant protein shows chemotactic activity on thymocytes, macrophages, THP-1 cells, and dendritics cells but is inactive on peripheral blood lymphocytes and neutrophils. Binds to CCR9. Binds to atypical chemokine receptor ACKR4 and mediates the recruitment of beta-arrestin (ARRB1/2) to ACKR4. The sequence is that of C-C motif chemokine 25 (CCL25) from Canis lupus familiaris (Dog).